The following is a 204-amino-acid chain: Casparian strip membrane protein 2 (204 aa).

Residues 1 to 41 (MKNESTFIDVPADSSSAMKGKAPLIGVAKDHTASGSGGYNR) lie on the Cytoplasmic side of the membrane. Residues 42 to 62 (GLSIFDFLLRLAAIVAASVAA) form a helical membrane-spanning segment. Residues 63-92 (GTMFTSDETLPFFTQFLQFEAGYDDLPTFQ) lie on the Extracellular side of the membrane. Residues 93–113 (FFVIAMSLVSGYIVLSLPISV) form a helical membrane-spanning segment. Residues 114 to 125 (VTIVRPLAAAPR) lie on the Cytoplasmic side of the membrane. A helical transmembrane segment spans residues 126–146 (LLLLVLDTAVMGLTMAAASSA). Residues 147–178 (AAISYVAHNGNQNTNWLPICQQFFDFCQKTSG) are Extracellular-facing. The chain crosses the membrane as a helical span at residues 179–199 (AVVSSFVAVVFFMILVVLSGV). The Cytoplasmic portion of the chain corresponds to 200 to 204 (ALERH).

This sequence belongs to the Casparian strip membrane proteins (CASP) family. As to quaternary structure, homodimer and heterodimers.

Its subcellular location is the cell membrane. Functionally, regulates membrane-cell wall junctions and localized cell wall deposition. Required for establishment of the Casparian strip membrane domain (CSD) and the subsequent formation of Casparian strips, a cell wall modification of the root endodermis that determines an apoplastic barrier between the intraorganismal apoplasm and the extraorganismal apoplasm and prevents lateral diffusion. This Raphanus sativus (Radish) protein is Casparian strip membrane protein 2.